A 450-amino-acid chain; its full sequence is Neutral protease 2 homolog AFUB_070680 (450 aa).

The N-terminal stretch at 1 to 19 (MKITALASAILAVAQGALA) is a signal peptide. A propeptide spanning residues 20-172 (LPARAPALDI…PASIKPLDRR (153 aa)) is cleaved from the precursor. 2 disulfide bridges follow: C179/C251 and C258/C276. H300 contacts Zn(2+). The active site involves E301. Zn(2+)-binding residues include H304 and D315. Over residues 364-392 (QPGQTEPGTQTMWDGYSQPGQTEPGTQTM) the composition is skewed to polar residues. The tract at residues 364-416 (QPGQTEPGTQTMWDGYSQPGQTEPGTQTMWDGYSQPGQTEPGTQTTWDGYSQP) is disordered. The span at 398–409 (QPGQTEPGTQTT) shows a compositional bias: low complexity.

This sequence belongs to the peptidase M35 family. Requires Zn(2+) as cofactor.

Its subcellular location is the secreted. The enzyme catalyses Preferential cleavage of bonds with hydrophobic residues in P1'. Also 3-Asn-|-Gln-4 and 8-Gly-|-Ser-9 bonds in insulin B chain.. Secreted metalloproteinase that allows assimilation of proteinaceous substrates. Shows high activities on basic nuclear substrates such as histone and protamine. May be involved in virulence. In Aspergillus fumigatus (strain ATCC MYA-4609 / CBS 101355 / FGSC A1100 / Af293) (Neosartorya fumigata), this protein is Neutral protease 2 homolog AFUB_070680.